The sequence spans 361 residues: Phosphoserine aminotransferase (361 aa).

Residue arginine 42 coordinates L-glutamate. Residues 76-77 (AR), tryptophan 102, threonine 153, aspartate 173, and glutamine 196 contribute to the pyridoxal 5'-phosphate site. Lysine 197 is subject to N6-(pyridoxal phosphate)lysine. A pyridoxal 5'-phosphate-binding site is contributed by 238–239 (NT).

Belongs to the class-V pyridoxal-phosphate-dependent aminotransferase family. SerC subfamily. Homodimer. It depends on pyridoxal 5'-phosphate as a cofactor.

Its subcellular location is the cytoplasm. The catalysed reaction is O-phospho-L-serine + 2-oxoglutarate = 3-phosphooxypyruvate + L-glutamate. The enzyme catalyses 4-(phosphooxy)-L-threonine + 2-oxoglutarate = (R)-3-hydroxy-2-oxo-4-phosphooxybutanoate + L-glutamate. Its pathway is amino-acid biosynthesis; L-serine biosynthesis; L-serine from 3-phospho-D-glycerate: step 2/3. The protein operates within cofactor biosynthesis; pyridoxine 5'-phosphate biosynthesis; pyridoxine 5'-phosphate from D-erythrose 4-phosphate: step 3/5. Its function is as follows. Catalyzes the reversible conversion of 3-phosphohydroxypyruvate to phosphoserine and of 3-hydroxy-2-oxo-4-phosphonooxybutanoate to phosphohydroxythreonine. The sequence is that of Phosphoserine aminotransferase from Yersinia enterocolitica serotype O:8 / biotype 1B (strain NCTC 13174 / 8081).